We begin with the raw amino-acid sequence, 161 residues long: ATP synthase subunit b (161 aa).

Residues 1–21 (MYLNATILGQVIAFILFVWFC) form a helical membrane-spanning segment.

This sequence belongs to the ATPase B chain family. F-type ATPases have 2 components, F(1) - the catalytic core - and F(0) - the membrane proton channel. F(1) has five subunits: alpha(3), beta(3), gamma(1), delta(1), epsilon(1). F(0) has three main subunits: a(1), b(2) and c(10-14). The alpha and beta chains form an alternating ring which encloses part of the gamma chain. F(1) is attached to F(0) by a central stalk formed by the gamma and epsilon chains, while a peripheral stalk is formed by the delta and b chains.

The protein resides in the cell inner membrane. Its function is as follows. F(1)F(0) ATP synthase produces ATP from ADP in the presence of a proton or sodium gradient. F-type ATPases consist of two structural domains, F(1) containing the extramembraneous catalytic core and F(0) containing the membrane proton channel, linked together by a central stalk and a peripheral stalk. During catalysis, ATP synthesis in the catalytic domain of F(1) is coupled via a rotary mechanism of the central stalk subunits to proton translocation. Component of the F(0) channel, it forms part of the peripheral stalk, linking F(1) to F(0). In Blochmanniella floridana, this protein is ATP synthase subunit b.